We begin with the raw amino-acid sequence, 158 residues long: S-ribosylhomocysteine lyase (158 aa).

H57, H61, and C125 together coordinate Fe cation.

It belongs to the LuxS family. As to quaternary structure, homodimer. Fe cation serves as cofactor.

The catalysed reaction is S-(5-deoxy-D-ribos-5-yl)-L-homocysteine = (S)-4,5-dihydroxypentane-2,3-dione + L-homocysteine. Functionally, involved in the synthesis of autoinducer 2 (AI-2) which is secreted by bacteria and is used to communicate both the cell density and the metabolic potential of the environment. The regulation of gene expression in response to changes in cell density is called quorum sensing. Catalyzes the transformation of S-ribosylhomocysteine (RHC) to homocysteine (HC) and 4,5-dihydroxy-2,3-pentadione (DPD). This is S-ribosylhomocysteine lyase from Deinococcus radiodurans (strain ATCC 13939 / DSM 20539 / JCM 16871 / CCUG 27074 / LMG 4051 / NBRC 15346 / NCIMB 9279 / VKM B-1422 / R1).